The chain runs to 264 residues: Protein GrpE (264 aa).

Residues 36–49 (KVQSKKVSSDHSSS) show a composition bias toward basic and acidic residues. Positions 36-59 (KVQSKKVSSDHSSSEDNASSDINS) are disordered. The segment covering 50 to 59 (EDNASSDINS) has biased composition (low complexity).

The protein belongs to the GrpE family. As to quaternary structure, homodimer.

It is found in the cytoplasm. In terms of biological role, participates actively in the response to hyperosmotic and heat shock by preventing the aggregation of stress-denatured proteins, in association with DnaK and GrpE. It is the nucleotide exchange factor for DnaK and may function as a thermosensor. Unfolded proteins bind initially to DnaJ; upon interaction with the DnaJ-bound protein, DnaK hydrolyzes its bound ATP, resulting in the formation of a stable complex. GrpE releases ADP from DnaK; ATP binding to DnaK triggers the release of the substrate protein, thus completing the reaction cycle. Several rounds of ATP-dependent interactions between DnaJ, DnaK and GrpE are required for fully efficient folding. The chain is Protein GrpE from Peanut witches'-broom phytoplasma.